Here is a 1186-residue protein sequence, read N- to C-terminus: Myelin transcription factor 1-like protein (1186 aa).

A disordered region spans residues 1 to 21 (MEVDTEEKRHRTRSKGVRVPV). The segment at 22 to 65 (EPAIQELFSCPTPGCDGSGHVSGKYARHRSVYGCPLAKKRKTQD) adopts a CCHHC-type 1 zinc-finger fold. The Zn(2+) site is built by cysteine 31, cysteine 36, histidine 49, and cysteine 55. 2 disordered regions span residues 56–175 (PLAK…QMNC) and 220–247 (RTESEMNSNTSNSLEDDSDKNENLGRKS). A compositionally biased stretch (acidic residues) spans 86 to 169 (SVDECDDSDG…EEEEEEEENE (84 aa)). The residue at position 250 (serine 250) is a Phosphoserine. Disordered regions lie at residues 342–372 (SETNPQERNPQQNMNIRQHVRPEEDFPGRTP) and 449–513 (REKM…GCDG). Over residues 343–357 (ETNPQERNPQQNMNI) the composition is skewed to polar residues. Composition is skewed to basic and acidic residues over residues 361–372 (VRPEEDFPGRTP), 449–487 (REKMAMEAGRRDNMRSYEDQSPRQLPGEDRKPKSSDSHV), and 495–505 (DPSRTEKKESK). 2 CCHHC-type zinc fingers span residues 497–540 (SRTE…PPEI) and 541–584 (LAMH…KLAK). 8 residues coordinate Zn(2+): cysteine 506, cysteine 511, histidine 524, cysteine 530, cysteine 550, cysteine 555, histidine 568, and cysteine 574. Disordered regions lie at residues 659 to 709 (RAIA…GGGS) and 753 to 780 (KPQDLCATRNPDMEVDENGTLDLSMNKQ). Residues 666–683 (QTRDISPKGYDDAKRYCK) show a composition bias toward basic and acidic residues. A compositionally biased stretch (low complexity) spans 685-709 (PSPSSSSTSSYAPSSSSNLSCGGGS). 3 consecutive CCHHC-type zinc fingers follow at residues 896–939 (LATS…GIRI), 945–988 (DKED…QKDG), and 998–1041 (KSVK…MKKA). The Zn(2+) site is built by cysteine 905, cysteine 910, histidine 923, cysteine 929, cysteine 954, cysteine 959, histidine 972, cysteine 978, cysteine 1007, cysteine 1012, histidine 1025, and cysteine 1031. Residues 1056–1130 (SNGIENDEEI…LANLSQSLIH (75 aa)) adopt a coiled-coil conformation.

Belongs to the MYT1 family. As to quaternary structure, interacts with SIN3B.

The protein localises to the nucleus. It is found in the chromosome. Functionally, transcription factor that plays a key role in neuronal differentiation by specifically repressing expression of non-neuronal genes during neuron differentiation. In contrast to other transcription repressors that inhibit specific lineages, mediates repression of multiple differentiation programs. Also represses expression of negative regulators of neurogenesis, such as members of the Notch signaling pathway, including HES1. The combination of three transcription factors, ASCL1, POU3F2/BRN2 and MYT1L, is sufficient to reprogram fibroblasts and other somatic cells into induced neuronal (iN) cells in vitro. Directly binds the 5'-AAGTT-3' core motif present on the promoter of target genes and represses transcription by recruiting a multiprotein complex containing SIN3B. The 5'-AAGTT-3' core motif is absent from the promoter of neural genes. The protein is Myelin transcription factor 1-like protein of Homo sapiens (Human).